Consider the following 152-residue polypeptide: Small integral membrane protein 28 (152 aa).

Residues 52-72 (FLCILLPATILLFLAFLLLFL) form a helical membrane-spanning segment. The disordered stretch occupies residues 117–152 (PLPPEATLPSQCLPPSYEEATRNPPGEEAQGCSPSV).

It is found in the membrane. In Homo sapiens (Human), this protein is Small integral membrane protein 28.